A 735-amino-acid chain; its full sequence is Translation factor GUF1 homolog, chloroplastic (735 aa).

2 disordered regions span residues 1-38 (MAVP…PSTS) and 106-126 (PENA…GVDN). A chloroplast-targeting transit peptide spans 1 to 47 (MAVPTIPSPACISQSANGSIISTRRSTETNPRQHPSTSYRCAGRVVR). Residues 11 to 38 (CISQSANGSIISTRRSTETNPRQHPSTS) are compositionally biased toward polar residues. Positions 106–115 (PENAEKDYSK) are enriched in basic and acidic residues. The tr-type G domain occupies 137 to 319 (SNIRNFSIIA…AVVKKIPPPK (183 aa)). Residues 146–153 (AHIDHGKS), 212–216 (DTPGH), and 266–269 (NKID) each bind GTP.

Belongs to the TRAFAC class translation factor GTPase superfamily. Classic translation factor GTPase family. LepA subfamily.

It localises to the plastid. The protein resides in the chloroplast. The enzyme catalyses GTP + H2O = GDP + phosphate + H(+). Promotes chloroplast protein synthesis. May act as a fidelity factor of the translation reaction, by catalyzing a one-codon backward translocation of tRNAs on improperly translocated ribosomes. This Physcomitrium patens (Spreading-leaved earth moss) protein is Translation factor GUF1 homolog, chloroplastic.